A 156-amino-acid chain; its full sequence is ATP synthase subunit b (156 aa).

A helical transmembrane segment spans residues 7–27 (LFLQAVVFAILVWFTMKFVWP).

Belongs to the ATPase B chain family. In terms of assembly, F-type ATPases have 2 components, F(1) - the catalytic core - and F(0) - the membrane proton channel. F(1) has five subunits: alpha(3), beta(3), gamma(1), delta(1), epsilon(1). F(0) has three main subunits: a(1), b(2) and c(10-14). The alpha and beta chains form an alternating ring which encloses part of the gamma chain. F(1) is attached to F(0) by a central stalk formed by the gamma and epsilon chains, while a peripheral stalk is formed by the delta and b chains.

The protein resides in the cell inner membrane. In terms of biological role, f(1)F(0) ATP synthase produces ATP from ADP in the presence of a proton or sodium gradient. F-type ATPases consist of two structural domains, F(1) containing the extramembraneous catalytic core and F(0) containing the membrane proton channel, linked together by a central stalk and a peripheral stalk. During catalysis, ATP synthesis in the catalytic domain of F(1) is coupled via a rotary mechanism of the central stalk subunits to proton translocation. Component of the F(0) channel, it forms part of the peripheral stalk, linking F(1) to F(0). The protein is ATP synthase subunit b of Polaromonas naphthalenivorans (strain CJ2).